Consider the following 152-residue polypeptide: D-aminoacyl-tRNA deacylase (152 aa).

Positions 142–143 match the Gly-cisPro motif, important for rejection of L-amino acids motif; sequence GP.

The protein belongs to the DTD family. Homodimer.

Its subcellular location is the cytoplasm. It carries out the reaction glycyl-tRNA(Ala) + H2O = tRNA(Ala) + glycine + H(+). The catalysed reaction is a D-aminoacyl-tRNA + H2O = a tRNA + a D-alpha-amino acid + H(+). Its function is as follows. An aminoacyl-tRNA editing enzyme that deacylates mischarged D-aminoacyl-tRNAs. Also deacylates mischarged glycyl-tRNA(Ala), protecting cells against glycine mischarging by AlaRS. Acts via tRNA-based rather than protein-based catalysis; rejects L-amino acids rather than detecting D-amino acids in the active site. By recycling D-aminoacyl-tRNA to D-amino acids and free tRNA molecules, this enzyme counteracts the toxicity associated with the formation of D-aminoacyl-tRNA entities in vivo and helps enforce protein L-homochirality. This Burkholderia cenocepacia (strain HI2424) protein is D-aminoacyl-tRNA deacylase.